The following is a 194-amino-acid chain: Small COPII coat GTPase SAR1B (194 aa).

Residues 2 to 4 (FLV) carry the STAR; SAR1-N-terminal activation recruitment. Required for the activation and subsequent recruitment to ER membrane motif. The mediates recruitment to ER membranes stretch occupies residues 10-14 (MFLWL). GDP contacts are provided by asparagine 30, alanine 31, glycine 32, lysine 33, threonine 34, and threonine 35. Asparagine 30 is a binding site for GTP. Glycine 32, lysine 33, threonine 34, and threonine 35 together coordinate GTP. Aspartate 70 contributes to the Mg(2+) binding site. Residues lysine 131, aspartate 133, and isoleucine 172 each contribute to the GDP site. 3 residues coordinate GTP: lysine 131, aspartate 133, and isoleucine 172.

Belongs to the small GTPase superfamily. SAR1 family. As to quaternary structure, homodimer; upon association with membrane. Part of the coat protein complex II/COPII, composed of SEC23/24 and SEC13/31 heterodimers, that it helps recruit and assemble on endoplasmic reticulum (ER) membranes at ER exit sites.

The protein localises to the endoplasmic reticulum membrane. The protein resides in the golgi apparatus. Its subcellular location is the golgi stack membrane. It is found in the cytoplasm. It localises to the cytosol. It carries out the reaction GTP + H2O = GDP + phosphate + H(+). Its activity is regulated as follows. Small GTPases activation is mediated by guanine exchange factors (GEF), while inactivation through hydrolysis of the bound GTP is stimulated by GTPase activating proteins (GAP). Its function is as follows. Small GTPase that cycles between an active GTP-bound and an inactive GDP-bound state and mainly functions in vesicle-mediated endoplasmic reticulum (ER) to Golgi transport. The active GTP-bound form inserts into the endoplasmic reticulum membrane where it recruits the remainder of the coat protein complex II/COPII. The coat protein complex II assembling and polymerizing on endoplasmic reticulum membrane is responsible for both the sorting of cargos and the deformation and budding of membranes into vesicles destined to the Golgi. In Dictyostelium discoideum (Social amoeba), this protein is Small COPII coat GTPase SAR1B (sarB).